The primary structure comprises 270 residues: MTLSLDATQLDRYSRHIIMDEVGPEGQGRLLSSRVVVVGAGGLGAPAIQYLAAVGVGELVVVDDDVVERSNLQRQVVHCDDDVGTPKAESAAAFVRGLNPDVSVEPVEARVDKSNVHEVVAGSDVVVDASDNFPTRYLLNDVCRFEGIPLVHGAIYKFEGQATTLVPDGPCYRCLFPEAPEPGTVPDCATTGVLGVLPGTVGCIQATEAMKLLLDEGEALDGRLLFYDAMDMTFETVPYRTNPDCPVCGEGGVDSIEDIDYVESCAISLD.

ATP is bound by residues glycine 42, aspartate 63, 70–74 (SNLQR), and lysine 87. A Glycyl lysine isopeptide (Lys-Gly) (interchain with G-Cter in SAMP2) cross-link involves residue lysine 113. Residue 131–132 (DN) participates in ATP binding. Residues cysteine 171 and cysteine 174 each contribute to the Zn(2+) site. The Glycyl thioester intermediate role is filled by cysteine 188. The Zn(2+) site is built by cysteine 245 and cysteine 248.

This sequence belongs to the HesA/MoeB/ThiF family. In terms of assembly, interacts with NcsA. Requires Zn(2+) as cofactor. Post-translationally, sampylated at Lys-113 with the archaeal ubiquitin-like protein SAMP2. Also sampylated with SAMP1.

The catalysed reaction is [small archaeal modifier protein]-C-terminal Gly-Gly + ATP + H(+) = [small archaeal modifier protein]-C-terminal Gly-Gly-AMP + diphosphate. Its function is as follows. Likely activates multiple ubiquitin-like SAMPs for protein conjugation as well as for sulfur transfer, via ATP-dependent adenylation at their C-terminus. In fact, it is required for the formation of all three SAMP1-, SAMP2- and SAMP3-protein conjugates, and for molybdenum cofactor (MoCo) biosynthesis and thiolation of tRNAs. This Haloferax volcanii (strain ATCC 29605 / DSM 3757 / JCM 8879 / NBRC 14742 / NCIMB 2012 / VKM B-1768 / DS2) (Halobacterium volcanii) protein is SAMP-activating enzyme E1 (ubaA).